The sequence spans 199 residues: Mediator of RNA polymerase II transcription subunit 7 (199 aa).

It belongs to the Mediator complex subunit 7 family. As to quaternary structure, component of the Mediator complex.

The protein localises to the nucleus. Component of the Mediator complex, a coactivator involved in the regulated transcription of nearly all RNA polymerase II-dependent genes. Mediator functions as a bridge to convey information from gene-specific regulatory proteins to the basal RNA polymerase II transcription machinery. Mediator is recruited to promoters by direct interactions with regulatory proteins and serves as a scaffold for the assembly of a functional preinitiation complex with RNA polymerase II and the general transcription factors. The chain is Mediator of RNA polymerase II transcription subunit 7 (MED7) from Eremothecium gossypii (strain ATCC 10895 / CBS 109.51 / FGSC 9923 / NRRL Y-1056) (Yeast).